Reading from the N-terminus, the 420-residue chain is Glucose-1-phosphate adenylyltransferase 2 (420 aa).

Alpha-D-glucose 1-phosphate is bound by residues tyrosine 109, glycine 175, 190–191, and serine 208; that span reads EK.

It belongs to the bacterial/plant glucose-1-phosphate adenylyltransferase family. As to quaternary structure, homotetramer.

It catalyses the reaction alpha-D-glucose 1-phosphate + ATP + H(+) = ADP-alpha-D-glucose + diphosphate. It functions in the pathway glycan biosynthesis; glycogen biosynthesis. In terms of biological role, involved in the biosynthesis of ADP-glucose, a building block required for the elongation reactions to produce glycogen. Catalyzes the reaction between ATP and alpha-D-glucose 1-phosphate (G1P) to produce pyrophosphate and ADP-Glc. This is Glucose-1-phosphate adenylyltransferase 2 from Pseudoalteromonas atlantica (strain T6c / ATCC BAA-1087).